The chain runs to 317 residues: tRNA dimethylallyltransferase (317 aa).

14–21 contacts ATP; sequence GPTASGKS. 16 to 21 is a substrate binding site; it reads TASGKS. 2 interaction with substrate tRNA regions span residues 39 to 42 and 163 to 167; these read DSVL and QRIQR.

This sequence belongs to the IPP transferase family. As to quaternary structure, monomer. Mg(2+) is required as a cofactor.

The enzyme catalyses adenosine(37) in tRNA + dimethylallyl diphosphate = N(6)-dimethylallyladenosine(37) in tRNA + diphosphate. Functionally, catalyzes the transfer of a dimethylallyl group onto the adenine at position 37 in tRNAs that read codons beginning with uridine, leading to the formation of N6-(dimethylallyl)adenosine (i(6)A). The sequence is that of tRNA dimethylallyltransferase from Xylella fastidiosa (strain 9a5c).